A 359-amino-acid polypeptide reads, in one-letter code: MSIVLAIDTATAAVTAGIVAFDGHDCFTLAERVTVDAKAHVERLTPNVLVALADAELAMCELDAVVVGCGPGPFTGLRVGMATAAAYGHALGIPVHGVCSLDAIGVRTTGDTLVVTDARRHEVYWARYRDGVRIAGPAVGSPTDVDPGTALTVAGSPEHAALFGLPLCEPIYPTPAGLVAAVPDWSVSPIPLVALYLRRPDAKPITADNEPIVIGTLTPADVDRCAQLESQFFDGDNPWPAAAFDRELANSYNCYVGARTADTLVGYAGITRLGHTPPFEYEVHTIAVDPAYRGRGVGRRLLGELLDFAGSGAIYLEVRTDNETAIALYRSVGFERIGLRPRYYPASGADAYLMRREAQ.

An N-terminal signal peptide occupies residues 1–15 (MSIVLAIDTATAAVT). Residues 212 to 359 (IVIGTLTPAD…DAYLMRREAQ (148 aa)) form the N-acetyltransferase domain.

This is an uncharacterized protein from Mycobacterium leprae (strain TN).